A 156-amino-acid polypeptide reads, in one-letter code: Endoribonuclease YbeY (156 aa).

Zn(2+) contacts are provided by histidine 111, histidine 115, and histidine 121.

This sequence belongs to the endoribonuclease YbeY family. Zn(2+) is required as a cofactor.

It localises to the cytoplasm. Its function is as follows. Single strand-specific metallo-endoribonuclease involved in late-stage 70S ribosome quality control and in maturation of the 3' terminus of the 16S rRNA. The sequence is that of Endoribonuclease YbeY from Hahella chejuensis (strain KCTC 2396).